Here is a 506-residue protein sequence, read N- to C-terminus: Tabersonine 3-oxygenase (506 aa).

The Lumenal portion of the chain corresponds to 1–5 (MEFHE). Residues 6–26 (SSPFVFITRGFIFIAISIAVL) form a helical membrane-spanning segment. The Cytoplasmic portion of the chain corresponds to 27–506 (RRIISKKTKT…DLQLIATSYA (480 aa)). A heme-binding site is contributed by Cys450.

This sequence belongs to the cytochrome P450 family. Heme serves as cofactor. As to expression, expressed in leaf epidermis.

It is found in the endoplasmic reticulum membrane. The enzyme catalyses 16-methoxytabersonine + reduced [NADPH--hemoprotein reductase] + O2 = (3R)-1,2-didehydro-3-hydroxy-16-methoxy-2,3-dihydrotabersonine + oxidized [NADPH--hemoprotein reductase] + H2O + H(+). It catalyses the reaction (-)-tabersonine + reduced [NADPH--hemoprotein reductase] + O2 = (3R)-1,2-didehydro-3-hydroxy-2,3-dihydrotabersonine + oxidized [NADPH--hemoprotein reductase] + H2O + H(+). It participates in alkaloid biosynthesis; vindoline biosynthesis. Functionally, cytochrome P450 catalyzing the monooxygenation of 16-methoxytabersonine, 16-hydroxytabersonine and tabersonine, but not of 2,3-dihydrotabersonine. Converts the C2,C3 alkene of tabersonine and 16-methoxytabersonine to the epoxides, which then spontaneously open to form the corresponding imine alcohols. Inactive in converting amyrin to ursolic acid. This is Tabersonine 3-oxygenase from Catharanthus roseus (Madagascar periwinkle).